A 54-amino-acid chain; its full sequence is Kazal-type inhibitor-like protein (54 aa).

In terms of domain architecture, Kazal-like spans 1-54 (MKVNCKGYPTKFCFGKPLPHCASDGKTYPNRCRFCNAFVKSHGLITLRYYGKCK). 3 disulfides stabilise this stretch: Cys-5/Cys-35, Cys-13/Cys-32, and Cys-21/Cys-53.

In terms of assembly, may form disulfide-linked dimers or trimers (in vitro). Expressed by the venom gland.

Its subcellular location is the secreted. Functionally, partially inhibits trypsin in vitro at slightly acidic pH and concentrations in excess of 0.3 mM. Has no protease inhibitory activity at neutral or basic pH. Has no antibacterial activity. Shows no toxicity in vertebrates apart from transient paw edema in mouse. The protein is Kazal-type inhibitor-like protein of Bothriechis schlegelii (Eyelash palm pitviper).